We begin with the raw amino-acid sequence, 300 residues long: Formate dehydrogenase-O iron-sulfur subunit (300 aa).

Topologically, residues 1 to 260 are cytoplasmic; it reads MAYQSQDIIR…KFWKGIWKPL (260 aa). 4 consecutive 4Fe-4S ferredoxin-type domains span residues 30–60, 91–123, 124–153, and 158–189; these read VAKL…DTVG, LEWL…QYAN, GIVD…LNPE, and YKCT…FGTK. C39, C42, C45, C49, C100, C103, C108, C112, C133, C136, C139, C143, C160, C163, C175, and C179 together coordinate [4Fe-4S] cluster. A helical membrane pass occupies residues 261-279; the sequence is AAVGFAATFAASIFHYVGV. The Periplasmic segment spans residues 280-300; sequence GPNRADEEENNLHEEKDEERK.

As to quaternary structure, formate dehydrogenase is a membrane-bound complex, formed by subunits alpha, beta and gamma. The cofactor is [4Fe-4S] cluster.

The protein resides in the cell membrane. Allows to use formate as major electron donor during aerobic respiration. The beta chain is an electron transfer unit containing 4 cysteine clusters involved in the formation of iron-sulfur centers. Electrons are transferred from the gamma chain to the molybdenum cofactor of the alpha subunit. The polypeptide is Formate dehydrogenase-O iron-sulfur subunit (fdoH) (Escherichia coli (strain K12)).